The chain runs to 312 residues: DNA-directed RNA polymerase subunit alpha (312 aa).

Residues 1 to 226 (MIEFKKPNIT…EHFKAFESAD (226 aa)) are alpha N-terminal domain (alpha-NTD). The tract at residues 243–312 (KEKKLEMTIE…DLGLSLRQED (70 aa)) is alpha C-terminal domain (alpha-CTD).

This sequence belongs to the RNA polymerase alpha chain family. As to quaternary structure, homodimer. The RNAP catalytic core consists of 2 alpha, 1 beta, 1 beta' and 1 omega subunit. When a sigma factor is associated with the core the holoenzyme is formed, which can initiate transcription.

It carries out the reaction RNA(n) + a ribonucleoside 5'-triphosphate = RNA(n+1) + diphosphate. Its function is as follows. DNA-dependent RNA polymerase catalyzes the transcription of DNA into RNA using the four ribonucleoside triphosphates as substrates. The protein is DNA-directed RNA polymerase subunit alpha of Lactobacillus delbrueckii subsp. bulgaricus (strain ATCC 11842 / DSM 20081 / BCRC 10696 / JCM 1002 / NBRC 13953 / NCIMB 11778 / NCTC 12712 / WDCM 00102 / Lb 14).